The sequence spans 171 residues: S-ribosylhomocysteine lyase (171 aa).

Fe cation-binding residues include His-54, His-58, and Cys-128.

This sequence belongs to the LuxS family. As to quaternary structure, homodimer. Fe cation serves as cofactor.

The catalysed reaction is S-(5-deoxy-D-ribos-5-yl)-L-homocysteine = (S)-4,5-dihydroxypentane-2,3-dione + L-homocysteine. Involved in the synthesis of autoinducer 2 (AI-2) which is secreted by bacteria and is used to communicate both the cell density and the metabolic potential of the environment. The regulation of gene expression in response to changes in cell density is called quorum sensing. Catalyzes the transformation of S-ribosylhomocysteine (RHC) to homocysteine (HC) and 4,5-dihydroxy-2,3-pentadione (DPD). This chain is S-ribosylhomocysteine lyase, found in Salmonella arizonae (strain ATCC BAA-731 / CDC346-86 / RSK2980).